A 911-amino-acid chain; its full sequence is Protein translocase subunit SecA (911 aa).

ATP contacts are provided by residues Gln90, Gly108–Thr112, and Asp515. Residues Cys891, Cys893, Cys902, and His903 each contribute to the Zn(2+) site.

This sequence belongs to the SecA family. In terms of assembly, monomer and homodimer. Part of the essential Sec protein translocation apparatus which comprises SecA, SecYEG and auxiliary proteins SecDF-YajC and YidC. It depends on Zn(2+) as a cofactor.

Its subcellular location is the cell inner membrane. It is found in the cytoplasm. The catalysed reaction is ATP + H2O + cellular proteinSide 1 = ADP + phosphate + cellular proteinSide 2.. Part of the Sec protein translocase complex. Interacts with the SecYEG preprotein conducting channel. Has a central role in coupling the hydrolysis of ATP to the transfer of proteins into and across the cell membrane, serving both as a receptor for the preprotein-SecB complex and as an ATP-driven molecular motor driving the stepwise translocation of polypeptide chains across the membrane. The sequence is that of Protein translocase subunit SecA from Blochmanniella pennsylvanica (strain BPEN).